Consider the following 117-residue polypeptide: Large ribosomal subunit protein bL19 (117 aa).

This sequence belongs to the bacterial ribosomal protein bL19 family.

Its function is as follows. This protein is located at the 30S-50S ribosomal subunit interface and may play a role in the structure and function of the aminoacyl-tRNA binding site. This is Large ribosomal subunit protein bL19 from Vibrio cholerae serotype O1 (strain ATCC 39541 / Classical Ogawa 395 / O395).